Reading from the N-terminus, the 335-residue chain is Succinylglutamate desuccinylase (335 aa).

Residues His59, Glu62, and His151 each coordinate Zn(2+). Residue Glu215 is part of the active site.

It belongs to the AspA/AstE family. Succinylglutamate desuccinylase subfamily. Zn(2+) serves as cofactor.

The catalysed reaction is N-succinyl-L-glutamate + H2O = L-glutamate + succinate. It functions in the pathway amino-acid degradation; L-arginine degradation via AST pathway; L-glutamate and succinate from L-arginine: step 5/5. Its function is as follows. Transforms N(2)-succinylglutamate into succinate and glutamate. This Pseudomonas putida (strain GB-1) protein is Succinylglutamate desuccinylase.